The sequence spans 328 residues: Malate dehydrogenase (328 aa).

12-18 (GAAGQIA) is an NAD(+) binding site. Residues arginine 93 and arginine 99 each contribute to the substrate site. NAD(+) is bound by residues asparagine 106, glutamine 113, and 130–132 (VGN). 2 residues coordinate substrate: asparagine 132 and arginine 163. The active-site Proton acceptor is histidine 188.

This sequence belongs to the LDH/MDH superfamily. MDH type 2 family.

The catalysed reaction is (S)-malate + NAD(+) = oxaloacetate + NADH + H(+). In terms of biological role, catalyzes the reversible oxidation of malate to oxaloacetate. This chain is Malate dehydrogenase, found in Burkholderia multivorans (strain ATCC 17616 / 249).